The chain runs to 155 residues: Small ribosomal subunit protein uS7 (155 aa).

It belongs to the universal ribosomal protein uS7 family. As to quaternary structure, part of the 30S ribosomal subunit. Contacts proteins S9 and S11.

One of the primary rRNA binding proteins, it binds directly to 16S rRNA where it nucleates assembly of the head domain of the 30S subunit. Is located at the subunit interface close to the decoding center, probably blocks exit of the E-site tRNA. The sequence is that of Small ribosomal subunit protein uS7 from Helicobacter pylori (strain Shi470).